The chain runs to 280 residues: Putative ABC transporter ATP-binding protein MTH_133 (280 aa).

Residues 6–241 (IEAVDIRYTY…IDTIRGANLR (236 aa)) enclose the ABC transporter domain. Position 39–46 (39–46 (GPNGAGKS)) interacts with ATP.

The protein belongs to the ABC transporter superfamily.

It is found in the cell membrane. Probably part of an ABC transporter complex. Responsible for energy coupling to the transport system. The chain is Putative ABC transporter ATP-binding protein MTH_133 from Methanothermobacter thermautotrophicus (strain ATCC 29096 / DSM 1053 / JCM 10044 / NBRC 100330 / Delta H) (Methanobacterium thermoautotrophicum).